We begin with the raw amino-acid sequence, 131 residues long: Peptide methionine sulfoxide reductase MsrB (131 aa).

Residues 8–130 (LEEWKQMLDP…NSVCLDLVPR (123 aa)) form the MsrB domain. Zn(2+) is bound by residues C47, C50, C96, and C99. C119 serves as the catalytic Nucleophile.

It belongs to the MsrB Met sulfoxide reductase family. The cofactor is Zn(2+).

The enzyme catalyses L-methionyl-[protein] + [thioredoxin]-disulfide + H2O = L-methionyl-(R)-S-oxide-[protein] + [thioredoxin]-dithiol. The chain is Peptide methionine sulfoxide reductase MsrB from Pseudomonas syringae pv. syringae (strain B728a).